We begin with the raw amino-acid sequence, 67 residues long: Kappa-scoloptoxin(04)-Ssd1b (67 aa).

An N-terminal signal peptide occupies residues 1 to 24; that stretch reads MKKTCVVSVFLVLLLLKFHDLSMG. The propeptide occupies 25-36; that stretch reads EEISPLKKVARR. Intrachain disulfides connect Cys44-Cys55 and Cys49-Cys62.

As to expression, expressed by the venom gland.

The protein resides in the secreted. The sequence is that of Kappa-scoloptoxin(04)-Ssd1b from Scolopendra dehaani (Thai centipede).